A 209-amino-acid chain; its full sequence is Thymidylate kinase (209 aa).

10-17 contributes to the ATP binding site; sequence GIDGCGKT.

It belongs to the thymidylate kinase family.

It catalyses the reaction dTMP + ATP = dTDP + ADP. Functionally, phosphorylation of dTMP to form dTDP in both de novo and salvage pathways of dTTP synthesis. This is Thymidylate kinase from Synechococcus sp. (strain CC9605).